Here is a 341-residue protein sequence, read N- to C-terminus: Serine/threonine-protein kinase pdik1l (341 aa).

One can recognise a Protein kinase domain in the interval Y8–I332. An ATP-binding site is contributed by V14–V22. D164 (proton acceptor) is an active-site residue.

This sequence belongs to the protein kinase superfamily. Ser/Thr protein kinase family.

The protein localises to the nucleus. It catalyses the reaction L-seryl-[protein] + ATP = O-phospho-L-seryl-[protein] + ADP + H(+). It carries out the reaction L-threonyl-[protein] + ATP = O-phospho-L-threonyl-[protein] + ADP + H(+). The protein is Serine/threonine-protein kinase pdik1l (pdik1l) of Danio rerio (Zebrafish).